Reading from the N-terminus, the 728-residue chain is Phosphoribosylformylglycinamidine synthase subunit PurL (728 aa).

The active site involves His40. ATP contacts are provided by Tyr43 and Lys82. Glu84 is a Mg(2+) binding site. Substrate contacts are provided by residues 85–88 (SHNH) and Arg107. His86 acts as the Proton acceptor in catalysis. Position 108 (Asp108) interacts with Mg(2+). Gln231 contacts substrate. Asp259 is a binding site for Mg(2+). 303-305 (ESQ) contributes to the substrate binding site. Positions 483 and 520 each coordinate ATP. Asn521 provides a ligand contact to Mg(2+). Residue Ser523 participates in substrate binding.

The protein belongs to the FGAMS family. In terms of assembly, monomer. Part of the FGAM synthase complex composed of 1 PurL, 1 PurQ and 2 PurS subunits.

It localises to the cytoplasm. The enzyme catalyses N(2)-formyl-N(1)-(5-phospho-beta-D-ribosyl)glycinamide + L-glutamine + ATP + H2O = 2-formamido-N(1)-(5-O-phospho-beta-D-ribosyl)acetamidine + L-glutamate + ADP + phosphate + H(+). It participates in purine metabolism; IMP biosynthesis via de novo pathway; 5-amino-1-(5-phospho-D-ribosyl)imidazole from N(2)-formyl-N(1)-(5-phospho-D-ribosyl)glycinamide: step 1/2. Functionally, part of the phosphoribosylformylglycinamidine synthase complex involved in the purines biosynthetic pathway. Catalyzes the ATP-dependent conversion of formylglycinamide ribonucleotide (FGAR) and glutamine to yield formylglycinamidine ribonucleotide (FGAM) and glutamate. The FGAM synthase complex is composed of three subunits. PurQ produces an ammonia molecule by converting glutamine to glutamate. PurL transfers the ammonia molecule to FGAR to form FGAM in an ATP-dependent manner. PurS interacts with PurQ and PurL and is thought to assist in the transfer of the ammonia molecule from PurQ to PurL. This chain is Phosphoribosylformylglycinamidine synthase subunit PurL, found in Carboxydothermus hydrogenoformans (strain ATCC BAA-161 / DSM 6008 / Z-2901).